We begin with the raw amino-acid sequence, 420 residues long: Forkhead box protein I3 (420 aa).

Disordered stretches follow at residues 103–122 (GCSQRPFAQPAPAAPASPAA), 234–306 (FRRK…GPML), and 364–396 (DTLQLSNSTSNSTGQRSSYYSPFPASTSGGQSS). The span at 108–122 (PFAQPAPAAPASPAA) shows a compositional bias: low complexity. Ser-119 is subject to Phosphoserine. Positions 145 to 239 (RPPYSYSALI…DNGNFRRKRK (95 aa)) form a DNA-binding region, fork-head. The Nuclear localization signal motif lies at 235-241 (RRKRKRR). Phosphoserine occurs at positions 277, 285, and 287. Positions 294–306 (TKSTASSPGGPML) are enriched in polar residues. The 9aaTAD signature appears at 406–414 (SMVNSLIYP).

Phosphorylation promotes the transcription factor activity. Dephosphorylation by protein phosphatase 2A (PP2A) reduces its activity.

It localises to the nucleus. Its function is as follows. Transcription factor required for pharyngeal arch development, which is involved in hair, ear, jaw and dental development. May act as a pioneer transcription factor during pharyngeal arch development. Required for epithelial cell differentiation within the epidermis. Acts at multiple stages of otic placode induction: necessary for preplacodal ectoderm to execute an inner ear program. Required for hair follicle stem cell specification. Acts downstream of TBX1 for the formation of the thymus and parathyroid glands from the third pharyngeal pouch. This Homo sapiens (Human) protein is Forkhead box protein I3.